We begin with the raw amino-acid sequence, 286 residues long: Probable endonuclease 4 (286 aa).

9 residues coordinate Zn(2+): His-72, His-112, Glu-147, Asp-181, His-184, His-215, Asp-228, His-230, and Glu-260.

Belongs to the AP endonuclease 2 family. It depends on Zn(2+) as a cofactor.

The enzyme catalyses Endonucleolytic cleavage to 5'-phosphooligonucleotide end-products.. Functionally, endonuclease IV plays a role in DNA repair. It cleaves phosphodiester bonds at apurinic or apyrimidinic (AP) sites, generating a 3'-hydroxyl group and a 5'-terminal sugar phosphate. This chain is Probable endonuclease 4, found in Mycoplasma pneumoniae (strain ATCC 29342 / M129 / Subtype 1) (Mycoplasmoides pneumoniae).